The sequence spans 286 residues: MKLLRAQTAGFCMGVDLALKKLAALIDAPAKDAPAKAIVTFGPIIHNPQVLEDYAAKGVGVVNDPAAIAPGTTVVIRAHGIPDPVRRAIADRGAEIVDATCPKVKKAQTLIQAQAKQGRTLLLFGEEDHPEVKGLLSYATAGAHVFGDMEELEKLDLPHGPTYFLAAQTTQDEQEFLRIRDYLRNRFGAGLTVLSTICNATMNRQQEAMDLAAAVDFLVVVGGRDSGNTRRLAQVARSAGTPSVHIETADELSPGMFTGYATIGLTAGASTPKKIIDRVQQVLESY.

Cysteine 12 contributes to the [4Fe-4S] cluster binding site. Residues histidine 46 and histidine 79 each coordinate (2E)-4-hydroxy-3-methylbut-2-enyl diphosphate. Histidine 46 and histidine 79 together coordinate dimethylallyl diphosphate. 2 residues coordinate isopentenyl diphosphate: histidine 46 and histidine 79. Cysteine 101 contributes to the [4Fe-4S] cluster binding site. A (2E)-4-hydroxy-3-methylbut-2-enyl diphosphate-binding site is contributed by histidine 129. Histidine 129 lines the dimethylallyl diphosphate pocket. Histidine 129 is a binding site for isopentenyl diphosphate. The active-site Proton donor is glutamate 131. Threonine 169 serves as a coordination point for (2E)-4-hydroxy-3-methylbut-2-enyl diphosphate. Cysteine 198 contributes to the [4Fe-4S] cluster binding site. Positions 226, 228, and 270 each coordinate (2E)-4-hydroxy-3-methylbut-2-enyl diphosphate. Residues serine 226, asparagine 228, and serine 270 each coordinate dimethylallyl diphosphate. Serine 226, asparagine 228, and serine 270 together coordinate isopentenyl diphosphate.

The protein belongs to the IspH family. It depends on [4Fe-4S] cluster as a cofactor.

The catalysed reaction is isopentenyl diphosphate + 2 oxidized [2Fe-2S]-[ferredoxin] + H2O = (2E)-4-hydroxy-3-methylbut-2-enyl diphosphate + 2 reduced [2Fe-2S]-[ferredoxin] + 2 H(+). It catalyses the reaction dimethylallyl diphosphate + 2 oxidized [2Fe-2S]-[ferredoxin] + H2O = (2E)-4-hydroxy-3-methylbut-2-enyl diphosphate + 2 reduced [2Fe-2S]-[ferredoxin] + 2 H(+). The protein operates within isoprenoid biosynthesis; dimethylallyl diphosphate biosynthesis; dimethylallyl diphosphate from (2E)-4-hydroxy-3-methylbutenyl diphosphate: step 1/1. It functions in the pathway isoprenoid biosynthesis; isopentenyl diphosphate biosynthesis via DXP pathway; isopentenyl diphosphate from 1-deoxy-D-xylulose 5-phosphate: step 6/6. Catalyzes the conversion of 1-hydroxy-2-methyl-2-(E)-butenyl 4-diphosphate (HMBPP) into a mixture of isopentenyl diphosphate (IPP) and dimethylallyl diphosphate (DMAPP). Acts in the terminal step of the DOXP/MEP pathway for isoprenoid precursor biosynthesis. The chain is 4-hydroxy-3-methylbut-2-enyl diphosphate reductase from Solidesulfovibrio magneticus (strain ATCC 700980 / DSM 13731 / RS-1) (Desulfovibrio magneticus).